A 354-amino-acid polypeptide reads, in one-letter code: tRNA N6-adenosine threonylcarbamoyltransferase (354 aa).

Fe cation is bound by residues His111 and His115. Residues 134 to 138, Asp167, Gly180, and Asn279 contribute to the substrate site; that span reads LVSGG. Asp319 contacts Fe cation.

The protein belongs to the KAE1 / TsaD family. Requires Fe(2+) as cofactor.

It localises to the cytoplasm. The enzyme catalyses L-threonylcarbamoyladenylate + adenosine(37) in tRNA = N(6)-L-threonylcarbamoyladenosine(37) in tRNA + AMP + H(+). Required for the formation of a threonylcarbamoyl group on adenosine at position 37 (t(6)A37) in tRNAs that read codons beginning with adenine. Is involved in the transfer of the threonylcarbamoyl moiety of threonylcarbamoyl-AMP (TC-AMP) to the N6 group of A37, together with TsaE and TsaB. TsaD likely plays a direct catalytic role in this reaction. The chain is tRNA N6-adenosine threonylcarbamoyltransferase from Neisseria gonorrhoeae (strain ATCC 700825 / FA 1090).